The primary structure comprises 286 residues: Pantothenate synthetase (286 aa).

30-37 (MGYFHEGH) is an ATP binding site. The Proton donor role is filled by His37. Residue Gln61 coordinates (R)-pantoate. A beta-alanine-binding site is contributed by Gln61. 147 to 150 (GKKD) serves as a coordination point for ATP. Residue Gln153 participates in (R)-pantoate binding. 184-187 (MSSR) is an ATP binding site.

The protein belongs to the pantothenate synthetase family. Homodimer.

It is found in the cytoplasm. It catalyses the reaction (R)-pantoate + beta-alanine + ATP = (R)-pantothenate + AMP + diphosphate + H(+). It functions in the pathway cofactor biosynthesis; (R)-pantothenate biosynthesis; (R)-pantothenate from (R)-pantoate and beta-alanine: step 1/1. In terms of biological role, catalyzes the condensation of pantoate with beta-alanine in an ATP-dependent reaction via a pantoyl-adenylate intermediate. This Syntrophus aciditrophicus (strain SB) protein is Pantothenate synthetase.